A 142-amino-acid chain; its full sequence is Large ribosomal subunit protein uL11 (142 aa).

The protein belongs to the universal ribosomal protein uL11 family. Part of the ribosomal stalk of the 50S ribosomal subunit. Interacts with L10 and the large rRNA to form the base of the stalk. L10 forms an elongated spine to which L12 dimers bind in a sequential fashion forming a multimeric L10(L12)X complex. Post-translationally, one or more lysine residues are methylated.

Forms part of the ribosomal stalk which helps the ribosome interact with GTP-bound translation factors. The chain is Large ribosomal subunit protein uL11 from Beijerinckia indica subsp. indica (strain ATCC 9039 / DSM 1715 / NCIMB 8712).